The following is a 318-amino-acid chain: Methionyl-tRNA formyltransferase (318 aa).

Residue 112–115 (SILP) participates in (6S)-5,6,7,8-tetrahydrofolate binding.

Belongs to the Fmt family.

The enzyme catalyses L-methionyl-tRNA(fMet) + (6R)-10-formyltetrahydrofolate = N-formyl-L-methionyl-tRNA(fMet) + (6S)-5,6,7,8-tetrahydrofolate + H(+). In terms of biological role, attaches a formyl group to the free amino group of methionyl-tRNA(fMet). The formyl group appears to play a dual role in the initiator identity of N-formylmethionyl-tRNA by promoting its recognition by IF2 and preventing the misappropriation of this tRNA by the elongation apparatus. The sequence is that of Methionyl-tRNA formyltransferase from Shewanella sp. (strain W3-18-1).